Here is a 392-residue protein sequence, read N- to C-terminus: MTVLGTALRPAATKVMLLGSGELGKEVAIECQRLGIETIAVDRYPDAPAMQVAHRAHVINMLHGESLRALIEQEKPDYIVPEIEAIATDTLVELEQAGQKVVPTARAAKLTMNREGIRRLAAEELQLPTSSYRFADSEEGFRAAVTDIGLPCIVKPVMSSSGKGQSFIRSADQLSEAWRYAQQGGRAGAGRVIVEGVVNFDFEITLLTVSAVDGVHFCAPVGHRQEDGDYRESWQPQQMSDLALERAQAIARKVVLALGGHGLFGVELFVCGDEVIFSEVSPRPHDTGMVTLISQDLSEFALHVRAFLGLPVGAIRQYGPAASAVILPQLTSQNVSFGQLQSAVGAGLQLRLFGKPEIDGTRRLGVTLAVADSVEEAVARAKTAAAAVIVEG.

N(1)-(5-phospho-beta-D-ribosyl)glycinamide is bound by residues 22–23 (EL) and glutamate 82. Residues arginine 114, lysine 155, 160–165 (SSGKGQ), 195–198 (EGVV), and glutamate 203 each bind ATP. Residues 119–308 (RLAAEELQLP…EFALHVRAFL (190 aa)) enclose the ATP-grasp domain. Mg(2+) is bound by residues glutamate 267 and glutamate 279. N(1)-(5-phospho-beta-D-ribosyl)glycinamide contacts are provided by residues aspartate 286, lysine 355, and 362-363 (RR).

This sequence belongs to the PurK/PurT family. As to quaternary structure, homodimer.

The catalysed reaction is N(1)-(5-phospho-beta-D-ribosyl)glycinamide + formate + ATP = N(2)-formyl-N(1)-(5-phospho-beta-D-ribosyl)glycinamide + ADP + phosphate + H(+). It functions in the pathway purine metabolism; IMP biosynthesis via de novo pathway; N(2)-formyl-N(1)-(5-phospho-D-ribosyl)glycinamide from N(1)-(5-phospho-D-ribosyl)glycinamide (formate route): step 1/1. Functionally, involved in the de novo purine biosynthesis. Catalyzes the transfer of formate to 5-phospho-ribosyl-glycinamide (GAR), producing 5-phospho-ribosyl-N-formylglycinamide (FGAR). Formate is provided by PurU via hydrolysis of 10-formyl-tetrahydrofolate. The sequence is that of Formate-dependent phosphoribosylglycinamide formyltransferase from Klebsiella pneumoniae (strain 342).